The following is a 194-amino-acid chain: Fibroblast growth factor 7 (194 aa).

Residues 1 to 31 form the signal peptide; it reads MRKWILTWILPSLLHRSCFHIICLVGTLSLD. Asparagine 45 carries an N-linked (GlcNAc...) asparagine glycan.

This sequence belongs to the heparin-binding growth factors family. Interacts with FGFBP1. Interacts with FGFR2. Affinity between fibroblast growth factors (FGFs) and their receptors is increased by heparan sulfate glycosaminoglycans that function as coreceptors.

The protein resides in the secreted. Functionally, plays an important role in the regulation of embryonic development, cell proliferation and cell differentiation. Required for normal branching morphogenesis. Growth factor active on keratinocytes. Possible major paracrine effector of normal epithelial cell proliferation. The protein is Fibroblast growth factor 7 (FGF7) of Sus scrofa (Pig).